A 172-amino-acid polypeptide reads, in one-letter code: MLVILAFIIVFHIVSTALLFISTIDNAWWVGDGFSADIWRVCTNSTNCTEINDLSSTEEFSGYSVMQAVQATMILSTILSCISFLIFLLQLFRLKQGERFVLTAIIQLMSCLCVMIGASVYTDRRQDLHHQNSQLYYLLQEGSYGYSFILAWVAFAFTFISGLMYMILRKRK.

4 consecutive transmembrane segments (helical) span residues 1-21 (MLVILAFIIVFHIVSTALLFI), 72-92 (TMILSTILSCISFLIFLLQLF), 100-120 (FVLTAIIQLMSCLCVMIGASV), and 148-168 (FILAWVAFAFTFISGLMYMIL).

It belongs to the PMP-22/EMP/MP20 family. In terms of assembly, interacts with PTK2; regulates PTK2 activation and localization. Interacts with ITGB3; regulates the levels of the heterodimer ITGA5-ITGB3 integrin surface expression. Interacts with P2RX7 (via C-terminus). Interacts with ITGB1; the interaction may be direct or indirect and ITGB1 has a heterodimer form. In terms of tissue distribution, expressed in glomeruli.

It localises to the golgi apparatus membrane. It is found in the cell membrane. The protein localises to the apical cell membrane. Its subcellular location is the membrane raft. The protein resides in the cytoplasm. It localises to the nucleus. It is found in the perinuclear region. Functions as a key regulator of cell membrane composition by regulating protein surface expression. Also, plays a role in regulation of processes including cell migration, cell proliferation, cell contraction and cell adhesion. Regulates transepithelial migration of neutrophils into the alveolar lumen, potentially via mediation of cell surface expression of adhesion markers and lipid raft formation. Negatively regulates caveolae formation by reducing CAV1 expression and CAV1 amount by increasing lysosomal degradation. Facilitates surface trafficking and the formation of lipid rafts bearing GPI-anchor proteins. Regulates surface expression of MHC1 and ICAM1 proteins increasing susceptibility to T-cell mediated cytotoxicity. Regulates the plasma membrane expression of the integrin heterodimers ITGA6-ITGB1, ITGA5-ITGB3 and ITGA5-ITGB1 resulting in modulation of cell-matrix adhesion. Also regulates many processes through PTK2. Regulates blood vessel endothelial cell migration and angiogenesis by regulating VEGF protein expression through PTK2 activation. Regulates cell migration and cell contraction through PTK2 and SRC activation. Regulates focal adhesion density, F-actin conformation and cell adhesion capacity through interaction with PTK2. Positively regulates cell proliferation. Plays a role during cell death and cell blebbing. Promotes angiogenesis and vasculogenesis through induction of VEGFA via a HIF1A-dependent pathway. Also plays a role in embryo implantation by regulating surface trafficking of integrin heterodimer ITGA5-ITGB3. Plays a role in placental angiogenesis and uterine natural killer cell regulation at the maternal-fetal placental interface, however not required in the maternal tissues for a viable pregnancy. Involved in the early stages of embryogenic development and cardiogenesis, potentially via regulation of epithelial-mesenchymal transition timing. May play a role in glomerular filtration. The chain is Epithelial membrane protein 2 (Emp2) from Rattus norvegicus (Rat).